A 246-amino-acid chain; its full sequence is MAGHSKWANIKHRKAAQDAQRGKIFTKLIRELVTAAKLGGGDVGANPRLRAAVDKALSNNMTRDTINRAIERGVGGGDGTNMETRIYEGYGPGGTAVMVECLSDNANRTISQVRPSFTKCGGNLGTEGSVGYLFSKKGLILVESADEDALTEAAIEAGADDIQVQEDGSVEIYTAWEDLGLVKDGIEVVGFKVVNAEVTMIPSTMVDLDAETAPKLLRLIDMLEDCDDVQNVYHNGEISDEVAALL.

Belongs to the TACO1 family.

It is found in the cytoplasm. The polypeptide is Probable transcriptional regulatory protein HS_0508 (Histophilus somni (strain 129Pt) (Haemophilus somnus)).